The sequence spans 85 residues: UPF0386 protein Bind_1628 (85 aa).

Belongs to the UPF0386 family.

The chain is UPF0386 protein Bind_1628 from Beijerinckia indica subsp. indica (strain ATCC 9039 / DSM 1715 / NCIMB 8712).